A 329-amino-acid chain; its full sequence is DNA-directed RNA polymerase subunit alpha (329 aa).

Positions 1-235 are alpha N-terminal domain (alpha-NTD); sequence MQGSVTEFLK…EQLEAFVDLR (235 aa). An alpha C-terminal domain (alpha-CTD) region spans residues 249–329; the sequence is FDPILLRPVD…NWPPASIADE (81 aa).

The protein belongs to the RNA polymerase alpha chain family. In terms of assembly, homodimer. The RNAP catalytic core consists of 2 alpha, 1 beta, 1 beta' and 1 omega subunit. When a sigma factor is associated with the core the holoenzyme is formed, which can initiate transcription.

It carries out the reaction RNA(n) + a ribonucleoside 5'-triphosphate = RNA(n+1) + diphosphate. DNA-dependent RNA polymerase catalyzes the transcription of DNA into RNA using the four ribonucleoside triphosphates as substrates. The protein is DNA-directed RNA polymerase subunit alpha of Cronobacter sakazakii (strain ATCC BAA-894) (Enterobacter sakazakii).